The following is a 198-amino-acid chain: Probable GTP-binding protein EngB (198 aa).

Residues 22–195 (DLPEIALAGR…WKAIHKMTKT (174 aa)) form the EngB-type G domain. GTP contacts are provided by residues 30-37 (GRSNVGKS), 57-61 (GKTQT), 75-78 (DVPG), 142-145 (TKAD), and 174-176 (FSS). Positions 37 and 59 each coordinate Mg(2+).

It belongs to the TRAFAC class TrmE-Era-EngA-EngB-Septin-like GTPase superfamily. EngB GTPase family. It depends on Mg(2+) as a cofactor.

In terms of biological role, necessary for normal cell division and for the maintenance of normal septation. The protein is Probable GTP-binding protein EngB of Bacillus cereus (strain G9842).